A 259-amino-acid chain; its full sequence is Isoprenyl transferase (259 aa).

Residue aspartate 30 is part of the active site. Position 30 (aspartate 30) interacts with Mg(2+). Substrate-binding positions include 31 to 34, tryptophan 35, arginine 43, histidine 47, and 75 to 77; these read GNGR and STE. Residue asparagine 78 is the Proton acceptor of the active site. Substrate is bound by residues tryptophan 79, arginine 81, arginine 198, and 204–206; that span reads RIS. Glutamate 217 serves as a coordination point for Mg(2+).

This sequence belongs to the UPP synthase family. Homodimer. Mg(2+) serves as cofactor.

Its function is as follows. Catalyzes the condensation of isopentenyl diphosphate (IPP) with allylic pyrophosphates generating different type of terpenoids. The chain is Isoprenyl transferase from Caulobacter vibrioides (strain ATCC 19089 / CIP 103742 / CB 15) (Caulobacter crescentus).